Consider the following 501-residue polypeptide: Glycerol kinase (501 aa).

Thr12 is a binding site for ADP. Residues Thr12, Thr13, and Ser14 each contribute to the ATP site. Thr12 is a binding site for sn-glycerol 3-phosphate. ADP is bound at residue Arg16. Positions 82, 83, 134, and 244 each coordinate sn-glycerol 3-phosphate. Glycerol-binding residues include Arg82, Glu83, Tyr134, Asp244, and Gln245. Thr266 and Gly310 together coordinate ADP. ATP contacts are provided by Thr266, Gly310, Gln314, and Gly411. Gly411 and Asn415 together coordinate ADP.

The protein belongs to the FGGY kinase family.

It catalyses the reaction glycerol + ATP = sn-glycerol 3-phosphate + ADP + H(+). The protein operates within polyol metabolism; glycerol degradation via glycerol kinase pathway; sn-glycerol 3-phosphate from glycerol: step 1/1. Its activity is regulated as follows. Inhibited by fructose 1,6-bisphosphate (FBP). Its function is as follows. Key enzyme in the regulation of glycerol uptake and metabolism. Catalyzes the phosphorylation of glycerol to yield sn-glycerol 3-phosphate. In Methylorubrum extorquens (strain PA1) (Methylobacterium extorquens), this protein is Glycerol kinase.